Here is a 264-residue protein sequence, read N- to C-terminus: 3-methyl-2-oxobutanoate hydroxymethyltransferase (264 aa).

Residues Asp-45 and Asp-84 each coordinate Mg(2+). Residues 45 to 46 (DS), Asp-84, and Lys-112 contribute to the 3-methyl-2-oxobutanoate site. Residue Glu-114 coordinates Mg(2+). The active-site Proton acceptor is Glu-181.

This sequence belongs to the PanB family. Homodecamer; pentamer of dimers. Mg(2+) is required as a cofactor.

The protein resides in the cytoplasm. It carries out the reaction 3-methyl-2-oxobutanoate + (6R)-5,10-methylene-5,6,7,8-tetrahydrofolate + H2O = 2-dehydropantoate + (6S)-5,6,7,8-tetrahydrofolate. The protein operates within cofactor biosynthesis; (R)-pantothenate biosynthesis; (R)-pantoate from 3-methyl-2-oxobutanoate: step 1/2. In terms of biological role, catalyzes the reversible reaction in which hydroxymethyl group from 5,10-methylenetetrahydrofolate is transferred onto alpha-ketoisovalerate to form ketopantoate. This is 3-methyl-2-oxobutanoate hydroxymethyltransferase from Shewanella sp. (strain MR-7).